A 419-amino-acid polypeptide reads, in one-letter code: O-antigen ligase (419 aa).

The Cytoplasmic portion of the chain corresponds to M1–M19. A helical transmembrane segment spans residues I20 to V38. Residues D39–S43 are Periplasmic-facing. Residues I44–R61 traverse the membrane as a helical segment. At G62–N71 the chain is on the cytoplasmic side. The chain crosses the membrane as a helical span at residues L72–A91. Residues F92–L107 lie on the Periplasmic side of the membrane. The helical transmembrane segment at N108–T125 threads the bilayer. Topologically, residues S126–S134 are cytoplasmic. Residues V135 to I153 traverse the membrane as a helical segment. Residues N154–G167 are Periplasmic-facing. Residues T168–I187 traverse the membrane as a helical segment. Residues L188 to H194 are Cytoplasmic-facing. Residues P195 to L211 form a helical membrane-spanning segment. At T212 to A216 the chain is on the periplasmic side. Residues T217–N234 traverse the membrane as a helical segment. Topologically, residues K235–F240 are cytoplasmic. The helical transmembrane segment at T241 to N259 threads the bilayer. Residues K260–K348 lie on the Periplasmic side of the membrane. A helical membrane pass occupies residues G349–A367. The Cytoplasmic segment spans residues Y368–A372. A helical membrane pass occupies residues L373–I391. Residues I392 to S396 are Periplasmic-facing. The helical transmembrane segment at I397–N412 threads the bilayer. Residues N413 to N419 are Cytoplasmic-facing.

In terms of assembly, homodimer.

It localises to the cell inner membrane. It catalyses the reaction a lipid-linked O antigen + a lipid A-core oligosaccharide = a lipopolysaccharide + a polyisoprenyl diphosphate.. Its pathway is bacterial outer membrane biogenesis; lipopolysaccharide biosynthesis. With respect to regulation, activity does not require ATP and magnesium ions. Transferase involved in the biosynthesis of the lipopolysaccharide (LPS). In vitro, catalyzes the transfer of a polymerized O-antigen molecule from its polyprenyl diphosphate membrane anchor to a terminal sugar of the lipid A-core oligosaccharide, finalizing the biosynthesis of the lipopolysaccharide. The enzyme is functional and can be used to give diverse hybrid O-antigens in vitro, but K12 strains do not produce the O-antigen in vivo due to mutations in the rfb gene cluster. K12 strains are phenotypically rough, their lipopolysaccharide having a complete core structure, but no O-antigen. In highly mucoid K12 strains, WaaL can ligate colanic acid (CA or M-antigen) repeats to a significant proportion of lipopolysaccharide (LPS) core acceptor molecules, forming the LPS glycoform M(LPS). The attachment point was identified as O-7 of the L-glycero-D-manno-heptose of the outer LPS core, the same position used for O-antigen ligation. Cannot catalyze ATP hydrolysis in vitro. This chain is O-antigen ligase, found in Escherichia coli (strain K12).